Here is a 466-residue protein sequence, read N- to C-terminus: 55 kDa erythrocyte membrane protein (466 aa).

An N-acetylthreonine modification is found at Thr2. Residues Ser13 and Ser19 each carry the phosphoserine modification. A Phosphothreonine modification is found at Thr49. Ser52, Ser57, and Ser110 each carry phosphoserine. The region spanning 71-152 is the PDZ domain; that stretch reads LIQFEKVTEE…MISLKVIPNQ (82 aa). In terms of domain architecture, SH3 spans 158–228; the sequence is ALQMFMRAQF…PSPELQEWRV (71 aa). At Ser243 the chain carries Phosphoserine. The interval 268-466 is interaction with PALS1; sequence VVSYEEVVRL…PQWVPVSWVY (199 aa). Positions 282-451 constitute a Guanylate kinase-like domain; it reads RKTLVLIGAS…TLKKLQEAFD (170 aa).

Belongs to the MAGUK family. As to quaternary structure, heterodimer with PALS1. Interacts with DLG5 and NF2. Interacts (via guanylate kinase-like domain) with WHRN (via third PDZ domain). Post-translationally, palmitoylated. In terms of tissue distribution, ubiquitous.

It localises to the cell membrane. It is found in the cell projection. The protein localises to the stereocilium. Essential regulator of neutrophil polarity. Regulates neutrophil polarization by regulating AKT1 phosphorylation through a mechanism that is independent of PIK3CG activity. The sequence is that of 55 kDa erythrocyte membrane protein (MPP1) from Homo sapiens (Human).